Here is an 82-residue protein sequence, read N- to C-terminus: Ranatensin (82 aa).

The N-terminal stretch at 1–27 is a signal peptide; that stretch reads MTTIPAIGILPIDFLTILLLFSFISHS. A propeptide spanning residues 28–47 is cleaved from the precursor; that stretch reads VCVEFAEDAGELDKSNAFRR. Met58 carries the methionine amide modification. A propeptide spanning residues 62 to 82 is cleaved from the precursor; the sequence is SLSDDTEQATMYSSRFVESTS.

It belongs to the bombesin/neuromedin-B/ranatensin family. As to expression, expressed by the skin glands.

Its subcellular location is the secreted. The sequence is that of Ranatensin from Lithobates pipiens (Northern leopard frog).